The chain runs to 266 residues: Small ribosomal subunit protein uS3 (266 aa).

Residues 39–107 (VREYLKKKLK…PVHVNIEEIR (69 aa)) enclose the KH type-2 domain. A disordered region spans residues 214–266 (PVVEEVTEDKRPRRNARPGDRRPRRDGEGGAPGARRGGPRRGAGKPEDGKTGE). Composition is skewed to basic and acidic residues over residues 230–241 (RPGDRRPRRDGE) and 257–266 (GKPEDGKTGE).

It belongs to the universal ribosomal protein uS3 family. Part of the 30S ribosomal subunit. Forms a tight complex with proteins S10 and S14.

Binds the lower part of the 30S subunit head. Binds mRNA in the 70S ribosome, positioning it for translation. In Burkholderia mallei (strain NCTC 10247), this protein is Small ribosomal subunit protein uS3.